Here is a 259-residue protein sequence, read N- to C-terminus: uncharacterized protein (259 aa).

The or 26 signal peptide spans 1–19 (MKLSVKIAGVLTVAAAAMT). 214–221 (GPYELGKT) contributes to the ATP binding site.

This is an uncharacterized protein from Bacillus subtilis (strain 168).